The sequence spans 381 residues: MDYYVTLSPGLEKISKNEIESFGGKIKEIRENKGRIFFSGDLKLIPKINYLSRTIERMNILLHREEIPNIALDDIYKRVYNIDWTEWIKENQSFAIRPLRAGEHNFTSIDIGRVAGEAVIKSYQRDKNIRLKVNLDEPDVIVRVEVIFDELIVGIDTTGDIALDKRGYRVFNHPAHLNATIASSLVYLSDWKDDEMLLDPMCGSGTIPIEGALMKRNIPPGKFRENKYGFKFIDIFGYELLDKIKKEIVENKNIYKIIGLDKNQKYLDGAKDNAKNAEVLDTIEFICGDATKLHEKFNESDVIIANPPYGIRIGSKRSVKKLYDEFLSSAKEIMHGSSRLIVITAEDKMFKDAIAKNNFEVKEEFNVMFGGLMTRVFYLTL.

The THUMP domain maps to 43–157 (KLIPKINYLS…FDELIVGIDT (115 aa)). Residues 173-177 (HPAHL), 204-206 (SGT), Asp-261, 289-290 (DA), and Asn-306 contribute to the S-adenosyl-L-methionine site.

The protein belongs to the methyltransferase superfamily.

Its subcellular location is the cytoplasm. The catalysed reaction is guanosine(6) in tRNA + S-adenosyl-L-methionine = N(2)-methylguanosine(6) in tRNA + S-adenosyl-L-homocysteine + H(+). S-adenosyl-L-methionine-dependent methyltransferase that catalyzes the methylation of the guanosine nucleotide at position 6 (m2G6) in tRNA(Cys). This chain is tRNA (guanine(6)-N2)-methyltransferase, found in Methanocaldococcus jannaschii (strain ATCC 43067 / DSM 2661 / JAL-1 / JCM 10045 / NBRC 100440) (Methanococcus jannaschii).